We begin with the raw amino-acid sequence, 612 residues long: Sulfite reductase [NADPH] flavoprotein alpha-component (612 aa).

Residues 64-202 form the Flavodoxin-like domain; sequence VTLISASQTG…QAQQWRQQVV (139 aa). FMN is bound by residues 70-75, 117-120, and 153-162; these read SQTGNA, STQG, and LGDTSYEHFC. In terms of domain architecture, FAD-binding FR-type spans 247–461; the sequence is TAPLTAQLSV…IEHNDNFRLP (215 aa). FAD contacts are provided by residues threonine 335, lysine 369, 399–402, 417–419, tyrosine 423, and 432–435; these read RLYS, TVG, and GGAS. NADP(+) contacts are provided by residues 532–533, 538–542, and aspartate 574; these read SR and KIYVQ. Tyrosine 612 serves as a coordination point for FAD.

It belongs to the NADPH-dependent sulphite reductase flavoprotein subunit CysJ family. In the N-terminal section; belongs to the flavodoxin family. This sequence in the C-terminal section; belongs to the flavoprotein pyridine nucleotide cytochrome reductase family. Alpha(8)-beta(8). The alpha component is a flavoprotein, the beta component is a hemoprotein. It depends on FAD as a cofactor. Requires FMN as cofactor.

The catalysed reaction is hydrogen sulfide + 3 NADP(+) + 3 H2O = sulfite + 3 NADPH + 4 H(+). Its pathway is sulfur metabolism; hydrogen sulfide biosynthesis; hydrogen sulfide from sulfite (NADPH route): step 1/1. Functionally, component of the sulfite reductase complex that catalyzes the 6-electron reduction of sulfite to sulfide. This is one of several activities required for the biosynthesis of L-cysteine from sulfate. The flavoprotein component catalyzes the electron flow from NADPH -&gt; FAD -&gt; FMN to the hemoprotein component. The protein is Sulfite reductase [NADPH] flavoprotein alpha-component of Yersinia pseudotuberculosis serotype O:1b (strain IP 31758).